The following is a 176-amino-acid chain: Mitochondrial inner membrane protein Mpv17 (176 aa).

Transmembrane regions (helical) follow at residues 18–38 (VQVL…QQLV), 53–73 (TMVS…YKVL), 94–114 (GGFA…LNGL), and 131–151 (LITN…LVPL).

This sequence belongs to the peroxisomal membrane protein PXMP2/4 family. Ubiquitous. Expressed in pancreas, kidney, muscle, liver, lung, placenta, brain and heart.

It is found in the mitochondrion inner membrane. Functionally, non-selective channel that modulates the membrane potential under normal conditions and oxidative stress, and is involved in mitochondrial homeostasis. Involved in mitochondrial deoxynucleoside triphosphates (dNTP) pool homeostasis and mitochondrial DNA (mtDNA) maintenance. May be involved in the regulation of reactive oxygen species metabolism and the control of oxidative phosphorylation. In Homo sapiens (Human), this protein is Mitochondrial inner membrane protein Mpv17.